An 81-amino-acid chain; its full sequence is Costars family protein ABRACL (81 aa).

Belongs to the costars family.

This chain is Costars family protein ABRACL, found in Coturnix coturnix (Common quail).